The chain runs to 331 residues: Bifunctional nuclease 1 (331 aa).

One can recognise a BFN domain in the interval 126 to 261 (CVQNNPRVLR…RIAYNNGLKV (136 aa)). A UVR domain is found at 291 to 326 (EAQEFDLVRNMLVAAVEERYKDAAQYRDQLFMFRAK).

This sequence belongs to the bifunctional nuclease family.

It localises to the nucleus. Its function is as follows. Bifunctional nuclease with both RNase and DNase activities. Involved in basal defense response. Participates in abscisic acid-derived callose deposition following infection by a necrotrophic pathogen. The polypeptide is Bifunctional nuclease 1 (BBD1) (Oryza sativa subsp. indica (Rice)).